Consider the following 658-residue polypeptide: DNA-binding protein Rfx5 (658 aa).

Residues 1 to 10 (MAEDKPDAKS) are compositionally biased toward basic and acidic residues. The tract at residues 1 to 28 (MAEDKPDAKSPKTGARPQGGADAGEPTT) is disordered. A2 is modified (N-acetylalanine). A Phosphoserine modification is found at S10. Residues 24-89 (GEPTTLLQRL…PSLLSNEEYM (66 aa)) form an N-terminal domain region. Residues 61–65 (LYLYL) are leucine-rich region; critical for dimer formation and for interaction with RFXAP. The segment at residues 91 to 167 (AYRWIRNHLE…YCYSGIRRKT (77 aa)) is a DNA-binding region (RFX-type winged-helix). The short motif at 172–177 (PPLPGL) is the PxLPxI/L motif; mediates interaction with RFXANK element. S184 carries the post-translational modification Phosphoserine. Disordered stretches follow at residues 250-315 (LAEE…SSVP), 382-422 (AGPG…GLGA), 443-602 (VPPR…DKIP), and 624-658 (KGEA…ATPP). Positions 277 to 309 (GPKKPERPAQPPKEQEARAGTDLPGRAERKKSV) are enriched in basic and acidic residues. Gly residues-rich tracts occupy residues 382-398 (AGPG…GPGP) and 406-422 (PGLG…GLGA). Composition is skewed to basic and acidic residues over residues 465 to 476 (PRPHDKGIKRTA) and 489 to 498 (PVKEMKHETQ). Residues 506–516 (KRKRGRPRKKP) are compositionally biased toward basic residues. Over residues 648 to 658 (PEHKDPKATPP) the composition is skewed to basic and acidic residues.

Belongs to the RFX family. In terms of assembly, homodimer. The RFX heterotetrameric complex consists of 2 molecules of RFX5 and one each of RFXAP and RFX-B/RFXANK; with each subunit representing a separate complementation group. Interacts (via PxLPxI/L motif) with RFXANK (via ankyrin repeats); the interaction is direct. RFX forms cooperative DNA binding complexes with X2BP and CBF/NF-Y. RFX associates with CIITA to form an active transcriptional complex. Phosphorylated.

Its subcellular location is the nucleus. Functionally, activates transcription from class II MHC promoters. Recognizes X-boxes. Mediates cooperative binding between RFX and NF-Y. RFX binds the X1 box of MHC-II promoters. This chain is DNA-binding protein Rfx5 (Rfx5), found in Mus musculus (Mouse).